The chain runs to 262 residues: Phosphate import ATP-binding protein PstB (262 aa).

The ABC transporter domain occupies 16 to 257 (MEARHLSVRY…PSEQRTEDYV (242 aa)). 48 to 55 (GPSGCGKS) contributes to the ATP binding site.

It belongs to the ABC transporter superfamily. Phosphate importer (TC 3.A.1.7) family. In terms of assembly, the complex is composed of two ATP-binding proteins (PstB), two transmembrane proteins (PstC and PstA) and a solute-binding protein (PstS).

It localises to the cell inner membrane. It catalyses the reaction phosphate(out) + ATP + H2O = ADP + 2 phosphate(in) + H(+). In terms of biological role, part of the ABC transporter complex PstSACB involved in phosphate import. Responsible for energy coupling to the transport system. This is Phosphate import ATP-binding protein PstB from Anaeromyxobacter dehalogenans (strain 2CP-C).